A 351-amino-acid chain; its full sequence is Translation initiation factor eIF2B subunit beta (351 aa).

The protein belongs to the eIF-2B alpha/beta/delta subunits family. Component of the translation initiation factor 2B (eIF2B) complex which is a heterodecamer of two sets of five different subunits: alpha, beta, gamma, delta and epsilon. Subunits alpha, beta and delta comprise a regulatory subcomplex and subunits epsilon and gamma comprise a catalytic subcomplex. Within the complex, the hexameric regulatory complex resides at the center, with the two heterodimeric catalytic subcomplexes bound on opposite sides.

It is found in the cytoplasm. Its subcellular location is the cytosol. Activated by the chemical integrated stress response (ISR) inhibitor ISRIB which stimulates guanine nucleotide exchange factor activity for both phosphorylated and unphosphorylated eIF2. In terms of biological role, acts as a component of the translation initiation factor 2B (eIF2B) complex, which catalyzes the exchange of GDP for GTP on eukaryotic initiation factor 2 (eIF2) gamma subunit. Its guanine nucleotide exchange factor activity is repressed when bound to eIF2 complex phosphorylated on the alpha subunit, thereby limiting the amount of methionyl-initiator methionine tRNA available to the ribosome and consequently global translation is repressed. This is Translation initiation factor eIF2B subunit beta (EIF2B2) from Oryctolagus cuniculus (Rabbit).